Consider the following 390-residue polypeptide: Glucose-fructose oxidoreductase domain-containing protein 1 (390 aa).

Residues methionine 1–leucine 21 form the signal peptide. Residues asparagine 161, asparagine 270, and asparagine 354 are each glycosylated (N-linked (GlcNAc...) asparagine).

The protein belongs to the Gfo/Idh/MocA family. As to quaternary structure, homodimer.

It localises to the secreted. Probably catalytically inactive enzyme. Does not bind NAD or NADP. This Xenopus tropicalis (Western clawed frog) protein is Glucose-fructose oxidoreductase domain-containing protein 1 (gfod1).